Here is a 359-residue protein sequence, read N- to C-terminus: Phospho-N-acetylmuramoyl-pentapeptide-transferase (359 aa).

Topologically, residues 1-25 (MLYQLALLLKDYWFAFNVLKYITFR) are periplasmic. Residues 26 to 48 (SFTAVLIAFFLTLVLSPSFINRL) form a helical membrane-spanning segment. Residues 49–74 (RKIQRLFGGYVREYTPESHEVKKYTP) lie on the Cytoplasmic side of the membrane. The muraymycin D2 site is built by Lys70 and Thr75. The helical transmembrane segment at 75–92 (TMGGIVILIVVTLSTLLL) threads the bilayer. At 93 to 98 (MRWDIK) the chain is on the periplasmic side. A helical transmembrane segment spans residues 99–120 (YTWVVLLSFLSFGTIGFWDDYV). The Cytoplasmic segment spans residues 121–130 (KLKNKKGISI). A helical membrane pass occupies residues 131–152 (KTKFLLQVLSASLISVLIYYWA). The Periplasmic portion of the chain corresponds to 153–172 (DIDTILYFPFFKELYVDLGV). A helical transmembrane segment spans residues 173-194 (LYLPFAVFVIVGSANAVNLTDG). Muraymycin D2-binding residues include Asn190, Asp193, and Asp196. Residues 195–197 (LDG) are Cytoplasmic-facing. Residues 198–218 (LAIGPAMTTATALGVVAYAVG) traverse the membrane as a helical segment. Residues 219–233 (HSKIAQYLNIPYVPY) are Periplasmic-facing. The helical transmembrane segment at 234–255 (AGELTVFCFALVGAGLGFLWFN) threads the bilayer. Topologically, residues 256-264 (SFPAQMFMG) are cytoplasmic. 2 residues coordinate muraymycin D2: Gly264 and Ser268. The helical transmembrane segment at 265 to 280 (DVGSLSIGASLATVAL) threads the bilayer. The Periplasmic segment spans residues 281–284 (LTKS). Residues 285 to 310 (EFIFAVAAGVFVFETISVILQIIYFR) form a helical membrane-spanning segment. Muraymycin D2 is bound by residues Gln305 and Ala321. Residues 311–332 (WTGGKRLFKRAPFHHHLELNGL) lie on the Cytoplasmic side of the membrane. A helical transmembrane segment spans residues 333–355 (PEPKIVVRMWIISILLAIIAISM). Residues 356-359 (LKLR) lie on the Periplasmic side of the membrane.

Belongs to the glycosyltransferase 4 family. MraY subfamily. Homodimer. Mg(2+) is required as a cofactor. It depends on Mn(2+) as a cofactor.

The protein localises to the cell inner membrane. It carries out the reaction UDP-N-acetyl-alpha-D-muramoyl-L-alanyl-gamma-D-glutamyl-meso-2,6-diaminopimeloyl-D-alanyl-D-alanine + di-trans,octa-cis-undecaprenyl phosphate = di-trans,octa-cis-undecaprenyl diphospho-N-acetyl-alpha-D-muramoyl-L-alanyl-D-glutamyl-meso-2,6-diaminopimeloyl-D-alanyl-D-alanine + UMP. It participates in cell wall biogenesis; peptidoglycan biosynthesis. Its activity is regulated as follows. Inhibited by natural nucleoside antibiotics including tunicamycin, capuramycin and muraymycin. Usually the cofactor magnesium is not required for antibiotic binding. Its function is as follows. Catalyzes the initial step of the lipid cycle reactions in the biosynthesis of the cell wall peptidoglycan: transfers peptidoglycan precursor phospho-MurNAc-pentapeptide from UDP-MurNAc-pentapeptide onto the lipid carrier undecaprenyl phosphate, yielding undecaprenyl-pyrophosphoryl-MurNAc-pentapeptide, known as lipid I. In Aquifex aeolicus (strain VF5), this protein is Phospho-N-acetylmuramoyl-pentapeptide-transferase.